The primary structure comprises 259 residues: Bisphosphoglycerate mutase (259 aa).

Ser2 carries the post-translational modification N-acetylserine. Substrate-binding positions include 10 to 17 (RHGEGAWN), 23 to 24 (CS), Arg62, 89 to 92 (ERHY), Arg100, and 116 to 117 (RR). The active-site Tele-phosphohistidine intermediate is the His11. Glu89 (proton donor/acceptor) is an active-site residue. Thr122 carries the post-translational modification Phosphothreonine. Residue 189–190 (GN) coordinates substrate.

The protein belongs to the phosphoglycerate mutase family. BPG-dependent PGAM subfamily. As to quaternary structure, homodimer.

The enzyme catalyses (2R)-3-phospho-glyceroyl phosphate = (2R)-2,3-bisphosphoglycerate + H(+). It carries out the reaction (2R)-2-phosphoglycerate = (2R)-3-phosphoglycerate. At alkaline pH BPGM favors the synthase reaction; however, at lower pH the phosphatase reaction is dominant. Inhibited by citrate. Functionally, plays a major role in regulating hemoglobin oxygen affinity by controlling the levels of its allosteric effector 2,3-bisphosphoglycerate (2,3-BPG). Also exhibits mutase (EC 5.4.2.11) activity. The chain is Bisphosphoglycerate mutase (BPGM) from Macaca fascicularis (Crab-eating macaque).